The sequence spans 244 residues: Glutathione S-transferase theta-2 (244 aa).

One can recognise a GST N-terminal domain in the interval glycine 2 to aspartate 82. Glutathione-binding positions include histidine 40 to lysine 41, lysine 53 to leucine 54, glutamate 66 to serine 67, and aspartate 104 to arginine 107. Residues aspartate 88–threonine 224 enclose the GST C-terminal domain.

The protein belongs to the GST superfamily. Theta family. Homodimer. Expressed at low levels in liver. In lung, expressed at low levels in ciliated bronchiolar cells, alveolar macrophages and alveolar type II cells.

The protein localises to the cytoplasm. The protein resides in the cytosol. Its subcellular location is the nucleus. The enzyme catalyses RX + glutathione = an S-substituted glutathione + a halide anion + H(+). Functionally, conjugation of reduced glutathione to a wide number of exogenous and endogenous hydrophobic electrophiles. Has a sulfatase activity. The chain is Glutathione S-transferase theta-2 (GSTT2) from Homo sapiens (Human).